A 225-amino-acid polypeptide reads, in one-letter code: uncharacterized protein (225 aa).

In terms of domain architecture, PCI spans 166-214 (LNSDVIKDKILAIIENVGEITYEELAEKINIPEEDLEKYLSELKESGDI).

This is an uncharacterized protein from Methanocaldococcus jannaschii (strain ATCC 43067 / DSM 2661 / JAL-1 / JCM 10045 / NBRC 100440) (Methanococcus jannaschii).